A 316-amino-acid chain; its full sequence is tRNA pseudouridine synthase B (316 aa).

The active-site Nucleophile is the D38. The 75-residue stretch at 238–312 (YPEVIVKSSA…PVCVLARQAG (75 aa)) folds into the PUA domain.

It belongs to the pseudouridine synthase TruB family. Type 1 subfamily.

It carries out the reaction uridine(55) in tRNA = pseudouridine(55) in tRNA. Responsible for synthesis of pseudouridine from uracil-55 in the psi GC loop of transfer RNAs. The polypeptide is tRNA pseudouridine synthase B (Pelotomaculum thermopropionicum (strain DSM 13744 / JCM 10971 / SI)).